The primary structure comprises 274 residues: Oxidized low-density lipoprotein receptor 1 (274 aa).

A compositionally biased stretch (basic and acidic residues) spans 1 to 16 (MAVDDLKVKPMKDQPD). The disordered stretch occupies residues 1-25 (MAVDDLKVKPMKDQPDQKSNGKKPK). The Cytoplasmic portion of the chain corresponds to 1–31 (MAVDDLKVKPMKDQPDQKSNGKKPKGLRFLS). Residues 32–54 (SPWWCPAAVALGVLCLGSLMTII) traverse the membrane as a helical; Signal-anchor for type II membrane protein segment. 2 S-palmitoyl cysteine lipidation sites follow: Cys-36 and Cys-46. The interval 55–150 (MLGMQLLQVS…SGPCPEDWLW (96 aa)) is neck. Topologically, residues 55–274 (MLGMQLLQVS…QKKANLLRSE (220 aa)) are extracellular. N-linked (GlcNAc...) asparagine glycosylation is found at Asn-73 and Asn-139. Residues 84-139 (QVLAQQQAEAASQESQRELKEMIETLAKRLDEKSKKQMELNHQYLNLQEALKRMDN) are a coiled coil. 3 disulfide bridges follow: Cys-144–Cys-155, Cys-172–Cys-264, and Cys-243–Cys-256. The region spanning 151-265 (HGKNCYLFSS…CILVAYSICQ (115 aa)) is the C-type lectin domain.

Homodimer; disulfide-linked. May form a hexamer composed of 3 homodimers. Interacts with HSP70. N-glycosylated.

It is found in the cell membrane. Its subcellular location is the membrane raft. It localises to the secreted. Receptor that mediates the recognition, internalization and degradation of oxidatively modified low density lipoprotein (oxLDL) by vascular endothelial cells. OxLDL is a marker of atherosclerosis that induces vascular endothelial cell activation and dysfunction, resulting in pro-inflammatory responses, pro-oxidative conditions and apoptosis. Its association with oxLDL induces the activation of NF-kappa-B through an increased production of intracellular reactive oxygen and a variety of pro-atherogenic cellular responses including a reduction of nitric oxide (NO) release, monocyte adhesion and apoptosis. In addition to binding oxLDL, it acts as a receptor for the HSP70 protein involved in antigen cross-presentation to naive T-cells in dendritic cells, thereby participating in cell-mediated antigen cross-presentation. Also involved in inflammatory process, by acting as a leukocyte-adhesion molecule at the vascular interface in endotoxin-induced inflammation. Also acts as a receptor for advanced glycation end (AGE) products, activated platelets, monocytes, apoptotic cells and both Gram-negative and Gram-positive bacteria. This Oryctolagus cuniculus (Rabbit) protein is Oxidized low-density lipoprotein receptor 1 (OLR1).